The sequence spans 117 residues: Putative phosphotransferase enzyme IIB component MPN_268 (117 aa).

Residues 1 to 21 traverse the membrane as a helical segment; that stretch reads MKVLLWIGYVLSFGLLYLYLV. A PTS EIIB type-1 domain is found at 42–117; the sequence is PFAVRDFIAA…QLKQQIENER (76 aa).

It is found in the membrane. In terms of biological role, the phosphoenolpyruvate-dependent sugar phosphotransferase system (PTS), a major carbohydrate active -transport system, catalyzes the phosphorylation of incoming sugar substrates concomitant with their translocation across the cell membrane. The sequence is that of Putative phosphotransferase enzyme IIB component MPN_268 from Mycoplasma pneumoniae (strain ATCC 29342 / M129 / Subtype 1) (Mycoplasmoides pneumoniae).